The following is a 95-amino-acid chain: Histone-like DNA-binding protein (95 aa).

It belongs to the bacterial histone-like protein family.

The chain is Histone-like DNA-binding protein from Rickettsia conorii (strain ATCC VR-613 / Malish 7).